A 266-amino-acid polypeptide reads, in one-letter code: tRNA pseudouridine synthase A (266 aa).

D57 serves as the catalytic Nucleophile. Substrate is bound at residue Y115.

Belongs to the tRNA pseudouridine synthase TruA family. As to quaternary structure, homodimer.

The catalysed reaction is uridine(38/39/40) in tRNA = pseudouridine(38/39/40) in tRNA. Its function is as follows. Formation of pseudouridine at positions 38, 39 and 40 in the anticodon stem and loop of transfer RNAs. The protein is tRNA pseudouridine synthase A of Buchnera aphidicola subsp. Acyrthosiphon pisum (strain APS) (Acyrthosiphon pisum symbiotic bacterium).